A 157-amino-acid chain; its full sequence is MGILRKKKHERNASFKSVLTSILATQAATFLLLISGVSLAGTAAAFIATMPLFVVFSPILVPAGITTGLLTTGLAAAGGAGATAVTIILWLYKRATGKEPPAVLSKVLKKIIPGAAAAPRAAPAAAPAAAPAAAPAAAPAPKPAAAPAPKPAAPPAL.

The tract at residues 2 to 20 (GILRKKKHERNASFKSVLT) is polar. The hydrophobic stretch occupies residues 21–138 (SILATQAATF…AAPAAAPAAA (118 aa)). The next 3 membrane-spanning stretches (helical) occupy residues 22 to 42 (ILAT…LAGT), 45 to 65 (AFIA…PAGI), and 72 to 92 (TGLA…LWLY). A run of 9 repeats spans residues 119–122 (PRAA), 123–126 (PAAA), 127–130 (PAAA), 131–134 (PAAA), 135–138 (PAAA), 139–142 (PAPK), 143–146 (PAAA), 147–150 (PAPK), and 151–154 (PAAP). The 9 X 4 AA tandem repeats of P-[AR]-[AP]-[AKP] stretch occupies residues 119 to 122 (PRAA). The segment at 137–157 (AAPAPKPAAAPAPKPAAPPAL) is disordered. Residues 138 to 157 (APAPKPAAAPAPKPAAPPAL) show a composition bias toward pro residues.

The protein belongs to the oleosin family. The full-length protein is found in the tapetal lipid bodies of immature anthers, the proteolytically cleaved C-terminal product is found on the coats of pollen grains. Highest expression is in microspores entering and undergoing mitosis. No expression is observed in male-sterile plants, green tissues or roots.

It is found in the lipid droplet. It localises to the membrane. Functionally, many of the major pollen coat proteins are derived from endoproteolytic cleavage of oleosin-like proteins. The chain is Oleosin-B1 (OlnB1) from Brassica napus (Rape).